A 580-amino-acid polypeptide reads, in one-letter code: Probable RNA-binding protein CG14230 (580 aa).

In terms of domain architecture, RRM spans 4 to 81; that stretch reads TRFFLADLPT…EKLRVSLAKE (78 aa). Residues 89–100 show a composition bias toward basic and acidic residues; the sequence is REREENQRREQG. Disordered stretches follow at residues 89–131 and 173–211; these read RERE…EDEE and QHRKAAKQKPDANVSQAEQKRKESLNKMRQGHQQKKSAI. Residues 110 to 120 show a composition bias toward polar residues; that stretch reads PSSQLLVQSGQ. The residue at position 231 (S231) is a Phosphoserine. 2 stretches are compositionally biased toward acidic residues: residues 254–263 and 298–313; these read ENDDDEEEEQ and NEEEEAELEDQPEPEE. 3 disordered regions span residues 254–316, 333–395, and 463–520; these read ENDD…ESER, SAND…SAVS, and PFSY…IPRN. Composition is skewed to basic and acidic residues over residues 348–358 and 365–377; these read LRFDPAKEGHQ and QPKEEEEKKEETS. The span at 386-395 shows a compositional bias: polar residues; the sequence is AGNSQASAVS. At S468 the chain carries Phosphoserine. T475 carries the post-translational modification Phosphothreonine.

The protein is Probable RNA-binding protein CG14230 of Drosophila melanogaster (Fruit fly).